We begin with the raw amino-acid sequence, 440 residues long: Glycerol-3-phosphate dehydrogenase [NAD(+)] 2, mitochondrial (440 aa).

The transit peptide at 1–16 directs the protein to the mitochondrion; that stretch reads MLAVRRLTRYTFLKRT. Ser70, Ser72, and Ser75 each carry phosphoserine. Residues 90 to 95, Phe122, and Phe178 each bind NAD(+); that span reads GSGNWG. Lys201 serves as a coordination point for substrate. Ala234 provides a ligand contact to NAD(+). Lys294 functions as the Proton acceptor in the catalytic mechanism. NAD(+) contacts are provided by Arg359 and Gln388. Residue 359 to 360 coordinates substrate; the sequence is RN.

The protein belongs to the NAD-dependent glycerol-3-phosphate dehydrogenase family.

Its subcellular location is the cytoplasm. It is found in the mitochondrion. The catalysed reaction is sn-glycerol 3-phosphate + NAD(+) = dihydroxyacetone phosphate + NADH + H(+). Catalyzes the production of glycerol under anaerobic growth conditions. Glycerol production serves as a redox sink by consuming the excess cytosolic NADH during anaerobic metabolism. In Saccharomyces cerevisiae (strain ATCC 204508 / S288c) (Baker's yeast), this protein is Glycerol-3-phosphate dehydrogenase [NAD(+)] 2, mitochondrial.